We begin with the raw amino-acid sequence, 311 residues long: Ribonuclease HIII (311 aa).

Residues 95–311 (MSIVGSDEVG…NTEKAFRLLK (217 aa)) form the RNase H type-2 domain. A divalent metal cation is bound by residues Asp101, Glu102, and Asp206.

Belongs to the RNase HII family. RnhC subfamily. Mn(2+) is required as a cofactor. Mg(2+) serves as cofactor.

Its subcellular location is the cytoplasm. The catalysed reaction is Endonucleolytic cleavage to 5'-phosphomonoester.. Endonuclease that specifically degrades the RNA of RNA-DNA hybrids. This is Ribonuclease HIII from Bacillus thuringiensis subsp. konkukian (strain 97-27).